Here is a 139-residue protein sequence, read N- to C-terminus: Acidic phospholipase A2 Tgc-E6 (139 aa).

Positions 1–16 (MRTLWIMAVLLLGVEG) are cleaved as a signal peptide. 7 disulfides stabilise this stretch: cysteine 42-cysteine 132, cysteine 44-cysteine 60, cysteine 59-cysteine 111, cysteine 65-cysteine 139, cysteine 66-cysteine 104, cysteine 73-cysteine 97, and cysteine 91-cysteine 102. Ca(2+) contacts are provided by tyrosine 43, glycine 45, and glycine 47. Histidine 63 is an active-site residue. Aspartate 64 is a Ca(2+) binding site. Residue aspartate 105 is part of the active site.

It belongs to the phospholipase A2 family. Group II subfamily. D49 sub-subfamily. Monomer. Ca(2+) is required as a cofactor. Expressed by the venom gland.

The protein localises to the secreted. The enzyme catalyses a 1,2-diacyl-sn-glycero-3-phosphocholine + H2O = a 1-acyl-sn-glycero-3-phosphocholine + a fatty acid + H(+). Its function is as follows. Snake venom phospholipase A2 (PLA2) that inhibits the ADP-(IC(50)=272 nM) and collagen-induced (IC(50)=518 nM) human platelet aggregation in platelet rich plasma. Exhibits very high hydrolytic activities toward the synthetic lecithin, and prefers the anionic micelles (dPPC with deoxycholate) to the zwitterionic micelles (dPPC with Triton X-100). PLA2 catalyzes the calcium-dependent hydrolysis of the 2-acyl groups in 3-sn-phosphoglycerides. This is Acidic phospholipase A2 Tgc-E6 from Trimeresurus gracilis (Kikuchi habu).